The chain runs to 539 residues: E3 ubiquitin-protein ligase arc-1 (539 aa).

An RING-type zinc finger spans residues 6–53 (CNVCNEEYSARDPLKCPRVLTGCGHTICHNCAISIAGRNSSIFCPFDR). Residues 103 to 149 (LLNLECDEDSEHVAVIYCTVCDSNLCERCSESTHSTNVLSKHRRIPL) form a B box-type zinc finger. The tract at residues 369–539 (ESRVVLLGLD…LSRLNGTCPV (171 aa)) is ARF-like. GTP-binding positions include 376-383 (GLDGAGKT), 422-426 (DVGGL), and 481-484 (NRKD).

It in the C-terminal section; belongs to the small GTPase superfamily. Arf family.

The catalysed reaction is S-ubiquitinyl-[E2 ubiquitin-conjugating enzyme]-L-cysteine + [acceptor protein]-L-lysine = [E2 ubiquitin-conjugating enzyme]-L-cysteine + N(6)-ubiquitinyl-[acceptor protein]-L-lysine.. It functions in the pathway protein modification; protein ubiquitination. Functionally, acts as an E3 ubiquitin-protein ligase. In Caenorhabditis elegans, this protein is E3 ubiquitin-protein ligase arc-1 (arc-1).